The chain runs to 471 residues: tRNA(Ile)-lysidine synthase (471 aa).

27-32 (SGGPDS) provides a ligand contact to ATP.

It belongs to the tRNA(Ile)-lysidine synthase family.

Its subcellular location is the cytoplasm. The catalysed reaction is cytidine(34) in tRNA(Ile2) + L-lysine + ATP = lysidine(34) in tRNA(Ile2) + AMP + diphosphate + H(+). Functionally, ligates lysine onto the cytidine present at position 34 of the AUA codon-specific tRNA(Ile) that contains the anticodon CAU, in an ATP-dependent manner. Cytidine is converted to lysidine, thus changing the amino acid specificity of the tRNA from methionine to isoleucine. The sequence is that of tRNA(Ile)-lysidine synthase from Dehalococcoides mccartyi (strain CBDB1).